A 270-amino-acid chain; its full sequence is Ribosomal RNA small subunit methyltransferase A (270 aa).

The S-adenosyl-L-methionine site is built by asparagine 15, isoleucine 17, glycine 42, glutamate 64, aspartate 89, and asparagine 108.

It belongs to the class I-like SAM-binding methyltransferase superfamily. rRNA adenine N(6)-methyltransferase family. RsmA subfamily.

The protein resides in the cytoplasm. It catalyses the reaction adenosine(1518)/adenosine(1519) in 16S rRNA + 4 S-adenosyl-L-methionine = N(6)-dimethyladenosine(1518)/N(6)-dimethyladenosine(1519) in 16S rRNA + 4 S-adenosyl-L-homocysteine + 4 H(+). In terms of biological role, specifically dimethylates two adjacent adenosines (A1518 and A1519) in the loop of a conserved hairpin near the 3'-end of 16S rRNA in the 30S particle. May play a critical role in biogenesis of 30S subunits. The protein is Ribosomal RNA small subunit methyltransferase A of Anaplasma marginale (strain Florida).